Here is a 142-residue protein sequence, read N- to C-terminus: Large ribosomal subunit protein bL17 (142 aa).

It belongs to the bacterial ribosomal protein bL17 family. In terms of assembly, part of the 50S ribosomal subunit. Contacts protein L32.

The chain is Large ribosomal subunit protein bL17 from Bartonella henselae (strain ATCC 49882 / DSM 28221 / CCUG 30454 / Houston 1) (Rochalimaea henselae).